The primary structure comprises 389 residues: S-adenosylmethionine synthase (389 aa).

H19 serves as a coordination point for ATP. D21 lines the Mg(2+) pocket. A K(+)-binding site is contributed by E47. Residues E60 and Q103 each coordinate L-methionine. The interval 103 to 113 (QSVDIAQGVSR) is flexible loop. ATP contacts are provided by residues 168-170 (DGK), 234-235 (RF), D243, 249-250 (RK), A266, and K270. D243 is an L-methionine binding site. K274 provides a ligand contact to L-methionine.

This sequence belongs to the AdoMet synthase family. As to quaternary structure, homotetramer; dimer of dimers. The cofactor is Mg(2+). Requires K(+) as cofactor.

The protein localises to the cytoplasm. The catalysed reaction is L-methionine + ATP + H2O = S-adenosyl-L-methionine + phosphate + diphosphate. The protein operates within amino-acid biosynthesis; S-adenosyl-L-methionine biosynthesis; S-adenosyl-L-methionine from L-methionine: step 1/1. Functionally, catalyzes the formation of S-adenosylmethionine (AdoMet) from methionine and ATP. The overall synthetic reaction is composed of two sequential steps, AdoMet formation and the subsequent tripolyphosphate hydrolysis which occurs prior to release of AdoMet from the enzyme. This Solidesulfovibrio magneticus (strain ATCC 700980 / DSM 13731 / RS-1) (Desulfovibrio magneticus) protein is S-adenosylmethionine synthase.